A 97-amino-acid chain; its full sequence is MNIRXLHDRVIVKRKEVETKSAGGIVLTGSAAAKSTRGEVLAVGNGRILENGEVKPLDVKVGDIVIFNDGYGVKSEKIDNEEXLIMSDSDXLAIVEA.

It belongs to the GroES chaperonin family. Heptamer of 7 subunits arranged in a ring. Interacts with the chaperonin GroEL.

The protein localises to the cytoplasm. Its function is as follows. Together with the chaperonin GroEL, plays an essential role in assisting protein folding. The GroEL-GroES system forms a nano-cage that allows encapsulation of the non-native substrate proteins and provides a physical environment optimized to promote and accelerate protein folding. GroES binds to the apical surface of the GroEL ring, thereby capping the opening of the GroEL channel. The protein is Co-chaperonin GroES of Stenotrophomonas maltophilia (Pseudomonas maltophilia).